The chain runs to 979 residues: UPF0182 protein BCG_0095 (979 aa).

7 helical membrane passes run 19 to 39 (LVTA…LVDI), 63 to 83 (LAIV…ALLL), 114 to 134 (LFGW…ASFD), 174 to 194 (WLFV…YLFG), 211 to 231 (VQLA…YWLD), 260 to 280 (KLVL…AIFL), and 288 to 308 (MAAA…PLLM). Positions 898 to 948 (GTGRVATAPGGDAASAPPPGAGGPAPPQAVPPPRTTQPPAAPPRGPDVPPA) are disordered. The span at 902 to 912 (VATAPGGDAAS) shows a compositional bias: low complexity. Residues 913–946 (APPPGAGGPAPPQAVPPPRTTQPPAAPPRGPDVP) are compositionally biased toward pro residues.

The protein belongs to the UPF0182 family.

It is found in the cell membrane. This chain is UPF0182 protein BCG_0095, found in Mycobacterium bovis (strain BCG / Pasteur 1173P2).